The primary structure comprises 348 residues: UPF0324 membrane protein BH02290 (348 aa).

Helical transmembrane passes span 13-35 (AFLN…AYGL), 45-67 (QAWL…CFTL), 74-96 (GITF…SISV), 106-128 (LLAS…GRLF), 135-157 (AMLV…APVI), 167-189 (SIAF…HPFL), 196-218 (YGVL…ASVS), 223-245 (QIAT…ALSI), 257-275 (LHTL…MLIR), 285-307 (LIPI…GLGV), and 319-341 (VILA…IQLN).

It belongs to the UPF0324 family.

The protein resides in the cell membrane. This Bartonella henselae (strain ATCC 49882 / DSM 28221 / CCUG 30454 / Houston 1) (Rochalimaea henselae) protein is UPF0324 membrane protein BH02290.